The chain runs to 353 residues: DNA integrity scanning protein DisA (353 aa).

Residues 6 to 144 (DKELMNILKI…GGIKYVLRDS (139 aa)) form the DAC domain. ATP contacts are provided by residues glycine 73, leucine 91, and 104-108 (TRHRT).

Belongs to the DisA family. Homooctamer. Mg(2+) is required as a cofactor.

It carries out the reaction 2 ATP = 3',3'-c-di-AMP + 2 diphosphate. Participates in a DNA-damage check-point that is active prior to asymmetric division when DNA is damaged. DisA forms globular foci that rapidly scan along the chromosomes during sporulation, searching for lesions. When a lesion is present, DisA pauses at the lesion site. This triggers a cellular response that culminates in a temporary block in sporulation initiation. Functionally, also has diadenylate cyclase activity, catalyzing the condensation of 2 ATP molecules into cyclic di-AMP (c-di-AMP). c-di-AMP acts as a signaling molecule that couples DNA integrity with progression of sporulation. The rise in c-di-AMP level generated by DisA while scanning the chromosome, operates as a positive signal that advances sporulation; upon encountering a lesion, the DisA focus arrests at the damaged site and halts c-di-AMP synthesis. This chain is DNA integrity scanning protein DisA, found in Clostridium botulinum (strain Okra / Type B1).